The sequence spans 197 residues: CASP-like protein 0U1 (197 aa).

At 1–13 the chain is on the cytoplasmic side; that stretch reads MDDFDPTVTNSPK. A helical transmembrane segment spans residues 14–34; that stretch reads FRLIAVQCLFSITAFAAMLSQ. The Extracellular segment spans residues 35–63; that stretch reads RHGLAGPDEMTLEECGPQACGYQKFSNFK. Residues 64-84 form a helical membrane-spanning segment; it reads FLIAVCIIYAVFSLVVMAAYL. The Cytoplasmic portion of the chain corresponds to 85–99; the sequence is LQRVPPPVTELTAYT. A helical transmembrane segment spans residues 100–120; the sequence is VMNVLLFAAFAMSATSCNITI. Over 121-135 the chain is Extracellular; the sequence is VDPVYPVCKRATSAK. A helical membrane pass occupies residues 136-156; that stretch reads ASIAFAFFTWLAVCFSMLFTY. The Cytoplasmic segment spans residues 157–197; it reads KEWRDVDYHVPGSGAYEFVPGVTSGSSRSSYPPQASSSSYA. The segment at 178-197 is disordered; that stretch reads VTSGSSRSSYPPQASSSSYA. The segment covering 180 to 197 has biased composition (low complexity); sequence SGSSRSSYPPQASSSSYA.

The protein belongs to the Casparian strip membrane proteins (CASP) family. As to quaternary structure, homodimer and heterodimers.

It localises to the cell membrane. The chain is CASP-like protein 0U1 from Micromonas commoda (strain RCC299 / NOUM17 / CCMP2709) (Picoplanktonic green alga).